The following is a 272-amino-acid chain: Small ribosomal subunit protein uS2 (272 aa).

Positions 244-272 (EDDYEGAEGDLDLDSANEEESLEDNNEEE) are disordered.

Belongs to the universal ribosomal protein uS2 family.

The sequence is that of Small ribosomal subunit protein uS2 from Trichodesmium erythraeum (strain IMS101).